Reading from the N-terminus, the 380-residue chain is Glucose-1-phosphate adenylyltransferase (380 aa).

Residues Gly-164, 179-180 (EK), and Ser-190 each bind alpha-D-glucose 1-phosphate.

This sequence belongs to the bacterial/plant glucose-1-phosphate adenylyltransferase family. Homotetramer.

The catalysed reaction is alpha-D-glucose 1-phosphate + ATP + H(+) = ADP-alpha-D-glucose + diphosphate. Its pathway is glycan biosynthesis; glycogen biosynthesis. In terms of biological role, involved in the biosynthesis of ADP-glucose, a building block required for the elongation reactions to produce glycogen. Catalyzes the reaction between ATP and alpha-D-glucose 1-phosphate (G1P) to produce pyrophosphate and ADP-Glc. In Streptococcus pneumoniae (strain 70585), this protein is Glucose-1-phosphate adenylyltransferase.